The sequence spans 306 residues: MSEVRIRPRQVLILIIVFLVVLMMVHRNGKRTCQGPEYLQAMFVQGDTLPTIYAVTPTYPRPAQKAELTRLSHLFMLLPHLHWIIVEDTNATTPLVRNLLDRAGLEKRSTLLNIKTPSEFKLKGKDPNWIKPRGVEQRNLALAWLRNHVDVDRHSIVFFMDDDNSYSTELFAEMSKIERGRVGVWPVGLVGGLMVERPLLTEDGTKVTGFNAAWRPERPFPIDMAAFAISMDLFIRNPQATFSYEVQRGYQESEILRHLTTRDQLQPLANRCTDVLVWHTRTEKTKLAAEEALLKKGQRSDGGMEV.

Topologically, residues 1 to 11 are cytoplasmic; the sequence is MSEVRIRPRQV. A helical; Signal-anchor for type II membrane protein transmembrane segment spans residues 12–29; the sequence is LILIIVFLVVLMMVHRNG. Residues 30–306 are Lumenal-facing; the sequence is KRTCQGPEYL…GQRSDGGMEV (277 aa). A glycan (N-linked (GlcNAc...) asparagine) is linked at asparagine 90. Mn(2+) is bound at residue aspartate 163. The active-site Proton acceptor is the glutamate 252.

The protein belongs to the glycosyltransferase 43 family. Requires Mn(2+) as cofactor.

It localises to the golgi apparatus membrane. The enzyme catalyses 3-O-(beta-D-galactosyl-(1-&gt;3)-beta-D-galactosyl-(1-&gt;4)-beta-D-xylosyl)-L-seryl-[protein] + UDP-alpha-D-glucuronate = 3-O-(beta-D-GlcA-(1-&gt;3)-beta-D-Gal-(1-&gt;3)-beta-D-Gal-(1-&gt;4)-beta-D-Xyl)-L-seryl-[protein] + UDP + H(+). It participates in protein modification; protein glycosylation. Involved in the biosynthesis of L2/HNK-1 carbohydrate epitope on both glycolipids and glycoproteins. Shows strict specificity for Gal-beta-1,3-Gal-beta-1,4-Xyl, exhibiting negligible incorporation into other galactoside substrates. The protein is Galactosylgalactosylxylosylprotein 3-beta-glucuronosyltransferase I (GlcAT-I) of Drosophila melanogaster (Fruit fly).